Here is a 668-residue protein sequence, read N- to C-terminus: DNA ligase (668 aa).

NAD(+)-binding positions include 34-38, 83-84, and E113; these read DAEYD and SL. Catalysis depends on K115, which acts as the N6-AMP-lysine intermediate. Residues R136, E170, K286, and K310 each coordinate NAD(+). Residues C404, C407, C422, and C427 each contribute to the Zn(2+) site. Residues 590 to 668 form the BRCT domain; it reads DSDSYFAGKT…EEQLMGELKK (79 aa).

Belongs to the NAD-dependent DNA ligase family. LigA subfamily. Mg(2+) serves as cofactor. Mn(2+) is required as a cofactor.

It carries out the reaction NAD(+) + (deoxyribonucleotide)n-3'-hydroxyl + 5'-phospho-(deoxyribonucleotide)m = (deoxyribonucleotide)n+m + AMP + beta-nicotinamide D-nucleotide.. DNA ligase that catalyzes the formation of phosphodiester linkages between 5'-phosphoryl and 3'-hydroxyl groups in double-stranded DNA using NAD as a coenzyme and as the energy source for the reaction. It is essential for DNA replication and repair of damaged DNA. This Bacillus subtilis (strain 168) protein is DNA ligase.